A 381-amino-acid chain; its full sequence is L-lactate dehydrogenase (381 aa).

One can recognise an FMN hydroxy acid dehydrogenase domain in the interval 1–380 (MIISASTDYR…TRDSLVRELG (380 aa)). Residue Y24 coordinates substrate. 2 residues coordinate FMN: S106 and Q127. Position 129 (Y129) interacts with substrate. T155 provides a ligand contact to FMN. R164 is a binding site for substrate. Residue K251 participates in FMN binding. The active-site Proton acceptor is the H275. Position 278 (R278) interacts with substrate. 306-330 (DSGIRSGLDVVRMIALGADTVLIGR) lines the FMN pocket.

It belongs to the FMN-dependent alpha-hydroxy acid dehydrogenase family. Homotetramer. Requires FMN as cofactor.

The protein resides in the cell inner membrane. It carries out the reaction (S)-lactate + A = pyruvate + AH2. In terms of biological role, catalyzes the conversion of L-lactate to pyruvate. Is coupled to the respiratory chain. This chain is L-lactate dehydrogenase, found in Pseudomonas entomophila (strain L48).